The chain runs to 159 residues: Protein-export protein SecB (159 aa).

This sequence belongs to the SecB family. As to quaternary structure, homotetramer, a dimer of dimers. One homotetramer interacts with 1 SecA dimer.

Its subcellular location is the cytoplasm. One of the proteins required for the normal export of preproteins out of the cell cytoplasm. It is a molecular chaperone that binds to a subset of precursor proteins, maintaining them in a translocation-competent state. It also specifically binds to its receptor SecA. The protein is Protein-export protein SecB of Pseudomonas fluorescens (strain ATCC BAA-477 / NRRL B-23932 / Pf-5).